Consider the following 141-residue polypeptide: Hemoglobin subunit beta (141 aa).

The 140-residue stretch at 2 to 141 (HWSEVELHEI…VVDAISKEYH (140 aa)) folds into the Globin domain. Positions 58 and 87 each coordinate heme b.

Belongs to the globin family. In terms of assembly, heterotetramer of two alpha chains and two beta chains. As to expression, red blood cells.

Functionally, involved in oxygen transport from the lung to the various peripheral tissues. The chain is Hemoglobin subunit beta (HBB) from Heterodontus portusjacksoni (Port Jackson shark).